Consider the following 588-residue polypeptide: Tetratricopeptide repeat protein 39B (588 aa).

TPR repeat units follow at residues 294–327, 485–518, and 526–559; these read SIIL…QQEW, CLVQ…EKRV, and PFTF…YKDY.

It belongs to the TTC39 family.

In terms of biological role, may be involved in lipid metabolism. This is Tetratricopeptide repeat protein 39B (ttc39b) from Xenopus tropicalis (Western clawed frog).